The following is a 364-amino-acid chain: DNA replication and repair protein RecF (364 aa).

30 to 37 contributes to the ATP binding site; it reads GNNAQGKT.

The protein belongs to the RecF family.

The protein localises to the cytoplasm. The RecF protein is involved in DNA metabolism; it is required for DNA replication and normal SOS inducibility. RecF binds preferentially to single-stranded, linear DNA. It also seems to bind ATP. This Clostridium botulinum (strain Langeland / NCTC 10281 / Type F) protein is DNA replication and repair protein RecF.